A 191-amino-acid polypeptide reads, in one-letter code: Dephospho-CoA kinase (191 aa).

The region spanning 3–191 (AIGITGSYAS…KLIKDLECRV (189 aa)) is the DPCK domain. 11–16 (ASGKTF) serves as a coordination point for ATP.

Belongs to the CoaE family.

Its subcellular location is the cytoplasm. The catalysed reaction is 3'-dephospho-CoA + ATP = ADP + CoA + H(+). The protein operates within cofactor biosynthesis; coenzyme A biosynthesis; CoA from (R)-pantothenate: step 5/5. Functionally, catalyzes the phosphorylation of the 3'-hydroxyl group of dephosphocoenzyme A to form coenzyme A. This is Dephospho-CoA kinase from Rickettsia conorii (strain ATCC VR-613 / Malish 7).